A 492-amino-acid polypeptide reads, in one-letter code: Alpha-2-antiplasmin (492 aa).

The first 22 residues, 1–22, serve as a signal peptide directing secretion; that stretch reads MALLWGLLALILSCLSSLCSAQ. The propeptide occupies 23 to 40; the sequence is FSPVSTMEPLDLQLMDGQ. Residues 56 to 76 form a disordered region; it reads QEPGGQIAPKKAPEDCKLSPT. A disulfide bond links Cys71 and Cys144. N-linked (GlcNAc...) asparagine glycosylation is found at Asn127, Asn249, Asn296, Asn310, and Asn317. Residues 433–492 are disordered; the sequence is SVRNPNPGAQPERKEQQDSPDGKDSFQDHKGLPRGDKPFDPDLKLGPPSEEDYAQPSSPK. Positions 443–475 are enriched in basic and acidic residues; it reads PERKEQQDSPDGKDSFQDHKGLPRGDKPFDPDL. Tyr485 carries the sulfotyrosine modification.

This sequence belongs to the serpin family. Forms protease inhibiting heterodimer with TMPRSS7. Post-translationally, proteolytically cleaved at Pro-31 by both the prolyl endopeptidase FAP form and antiplasmin-cleaving enzyme FAP soluble form to generate mature alpha-2-antiplasmin. Expressed by the liver and secreted in plasma.

Its subcellular location is the secreted. Serine protease inhibitor. The major targets of this inhibitor are plasmin and trypsin, but it also inactivates matriptase-3/TMPRSS7 and chymotrypsin. This Bos taurus (Bovine) protein is Alpha-2-antiplasmin (SERPINF2).